The sequence spans 487 residues: MPN domain-containing protein (487 aa).

The interval 1–55 (MAAPESLSPGATAEEAPEEDEDDAEAEDPERGTGSGGRSGSLGGSGGGTAGPGMA) is disordered. Alanine 2 is modified (N-acetylalanine). Serine 8 carries the post-translational modification Phosphoserine. The segment covering 15–28 (EAPEEDEDDAEAED) has biased composition (acidic residues). A compositionally biased stretch (gly residues) spans 33–55 (TGSGGRSGSLGGSGGGTAGPGMA). The region spanning 61-156 (TRRAVTLRVL…KYKAAWLRRH (96 aa)) is the RAMA domain. Serine 113, serine 115, and tryptophan 135 together coordinate DNA. A disordered region spans residues 163-217 (ATADESPTSEGEEEELLLEEEEEDVLAGVSSEDKGHRPPGKGSLEPEATPPGKRM). 2 positions are modified to phosphoserine: serine 168 and serine 171. Positions 172–187 (EGEEEELLLEEEEEDV) are enriched in acidic residues. Positions 258-393 (VAVSSNVLFL…PESKICPFWV (136 aa)) constitute an MPN domain. Positions 335, 337, and 348 each coordinate Zn(2+). The short motif at 335 to 348 (HSHPHSPAVPSLQD) is the JAMM motif element.

The protein belongs to the peptidase M67 family. As to quaternary structure, monomer. Mainly monomoric, but when binds to dsDNA, forms homotetramer assembled into two homodimers. May interact with histones; this interaction is facilitated by. In terms of processing, degraded following binding to N(6)-methyladenosine methylated DNA (m6A).

Probable protease. Acts as a sensor of N(6)-methyladenosine methylation on DNA (m6A): recognizes and binds m6A DNA, leading to its degradation. Binds only double strand DNA (dsDNA) in a sequence-independent manner. The protein is MPN domain-containing protein of Mus musculus (Mouse).